Reading from the N-terminus, the 234-residue chain is Sugar fermentation stimulation protein homolog (234 aa).

Belongs to the SfsA family.

This is Sugar fermentation stimulation protein homolog from Pseudoalteromonas atlantica (strain T6c / ATCC BAA-1087).